The primary structure comprises 269 residues: Phosphate import ATP-binding protein PstB (269 aa).

The region spanning S21–I264 is the ABC transporter domain. Residue G53–S60 coordinates ATP.

Belongs to the ABC transporter superfamily. Phosphate importer (TC 3.A.1.7) family. As to quaternary structure, the complex is composed of two ATP-binding proteins (PstB), two transmembrane proteins (PstC and PstA) and a solute-binding protein (PstS).

It is found in the cell inner membrane. It catalyses the reaction phosphate(out) + ATP + H2O = ADP + 2 phosphate(in) + H(+). In terms of biological role, part of the ABC transporter complex PstSACB involved in phosphate import. Responsible for energy coupling to the transport system. This chain is Phosphate import ATP-binding protein PstB, found in Nitrosospira multiformis (strain ATCC 25196 / NCIMB 11849 / C 71).